The primary structure comprises 162 residues: NADH-quinone oxidoreductase subunit I (162 aa).

4Fe-4S ferredoxin-type domains lie at 53-83 (QRRY…IESE) and 93-122 (SRYD…ETHI). [4Fe-4S] cluster contacts are provided by Cys-63, Cys-66, Cys-69, Cys-73, Cys-102, Cys-105, Cys-108, and Cys-112.

The protein belongs to the complex I 23 kDa subunit family. In terms of assembly, NDH-1 is composed of 14 different subunits. Subunits NuoA, H, J, K, L, M, N constitute the membrane sector of the complex. [4Fe-4S] cluster is required as a cofactor.

It localises to the cell inner membrane. It carries out the reaction a quinone + NADH + 5 H(+)(in) = a quinol + NAD(+) + 4 H(+)(out). Its function is as follows. NDH-1 shuttles electrons from NADH, via FMN and iron-sulfur (Fe-S) centers, to quinones in the respiratory chain. The immediate electron acceptor for the enzyme in this species is believed to be ubiquinone. Couples the redox reaction to proton translocation (for every two electrons transferred, four hydrogen ions are translocated across the cytoplasmic membrane), and thus conserves the redox energy in a proton gradient. The polypeptide is NADH-quinone oxidoreductase subunit I (Chromobacterium violaceum (strain ATCC 12472 / DSM 30191 / JCM 1249 / CCUG 213 / NBRC 12614 / NCIMB 9131 / NCTC 9757 / MK)).